We begin with the raw amino-acid sequence, 474 residues long: Myocyte-specific enhancer factor 2C (474 aa).

The region spanning 3–57 is the MADS-box domain; sequence RKKIQITRIMDERNRQVTFTKRKFGLMKKAYELSVLCDCEIALIIFNSTNKLFQY. Position 4 is an N6-acetyllysine (K4). The mef2-type DNA-binding region spans 58–86; that stretch reads ASTDMDKVLLKYTEYNEPHESRTNSDIVE. The residue at position 59 (S59) is a Phosphoserine; by CK2. The interval 91 to 118 is disordered; the sequence is KGLNGCDSPDPDADDSVGHSPESEDKYR. Phosphoserine occurs at positions 98 and 106. A Phosphothreonine modification is found at G108. Phosphoserine is present on S110. Residues K116 and K119 each carry the N6-acetyllysine modification. Residues S222 and S228 each carry the phosphoserine modification. N6-acetyllysine is present on residues K234 and K239. S240 bears the Phosphoserine mark. N6-acetyllysine occurs at positions 252 and 264. Positions 271 to 278 are beta domain; the sequence is SEDVDLLL. Phosphothreonine; by MAPK14 is present on residues T293 and T300. The segment at 368-399 is transcription repressor; that stretch reads ACTSTHLSQSSNLSLPSTQSLSIKSEPVSPPR. A compositionally biased stretch (polar residues) spans 375-390; sequence SQSSNLSLPSTQSLSI. The disordered stretch occupies residues 375-474; that stretch reads SQSSNLSLPS…RMRLSEGWAT (100 aa). A Glycyl lysine isopeptide (Lys-Gly) (interchain with G-Cter in SUMO) cross-link involves residue K391. Position 396 is a phosphoserine; by CDK5 (S396). S420 is subject to Phosphoserine; by MAPK7. Residues 420–433 are compositionally biased toward low complexity; the sequence is SPVDSLSSCSSSYD. Residues 434–444 show a composition bias toward basic and acidic residues; it reads GSDREDHRNEF. S446 bears the Phosphoserine mark.

Belongs to the MEF2 family. Forms a complex with class II HDACs in undifferentiating cells. On myogenic differentiation, HDACs are released into the cytoplasm allowing MEF2s to interact with other proteins for activation. Interacts with EP300 in differentiating cells; the interaction acetylates MEF2C leading to increased DNA binding and activation. Interacts with HDAC7 and CARM1. Interacts with HDAC4, HDAC7 AND HDAC9; the interaction with HDACs represses transcriptional activity. Interacts with LPIN1. Interacts with MYOCD. Interacts with AKAP13. Interacts with FOXK1; the interaction inhibits MEF2C transactivation activity. Interacts (via N-terminus) with HABP4; this interaction decreases DNA-binding activity of MEF2C in myocardial cells in response to mechanical stress. Interacts with JPH2; interaction specifically takes place with the Junctophilin-2 N-terminal fragment cleavage product of JPH2. Interacts (via MADS box) with SOX18. Interacts with PHF7; the interaction promotes MEF2C binding to its transcription targets. Post-translationally, phosphorylation on Ser-59 enhances DNA binding activity. Phosphorylation on Ser-396 is required for Lys-391 sumoylation and inhibits transcriptional activity. Acetylated by p300 on several sites in diffentiating myocytes. Acetylation on Lys-4 increases DNA binding and transactivation. In terms of processing, sumoylated on Lys-391 with SUMO2 but not by SUMO1 represses transcriptional activity. Post-translationally, proteolytically cleaved in cerebellar granule neurons, probably by caspase 7, following neurotoxicity. Preferentially cleaves the CDK5-mediated hyperphosphorylated form which leads to neuron apoptosis and transcriptional inactivation. As to expression, widely expressed though mainly restricted to skeletal and cardiac muscle, brain, neurons and lymphocytes. Beta domain-lacking isoforms are the most predominantly expressed in all tissues including skeletal and cardiac muscle and brain. Only brain expresses all isoforms. Expression occurs primarily in the internal granule cell layer of the olfactory bulb, cortex, thalamus, hippocampus and cerebellum. Low levels in the cerebellum and hindbrain. Expressed throughout the cortex, including the frontal and entorhinal cortex, dentate gyrus, and basolateral amygdala. Selectively expressed in B-cells but not in T-cells, and its expression increases as B-cells mature.

The protein localises to the nucleus. It localises to the cytoplasm. The protein resides in the sarcoplasm. Transcription activator which binds specifically to the MEF2 element present in the regulatory regions of many muscle-specific genes. Controls cardiac morphogenesis and myogenesis, and is also involved in vascular development. Enhances transcriptional activation mediated by SOX18. May also be involved in neurogenesis and in the development of cortical architecture. Isoforms that lack the repressor domain are more active than isoform 1. Plays an essential role in hippocampal-dependent learning and memory by suppressing the number of excitatory synapses and thus regulating basal and evoked synaptic transmission. Crucial for normal neuronal development, distribution, and electrical activity in the neocortex. Necessary for proper development of megakaryocytes and platelets and for bone marrow B-lymphopoiesis. Required for B-cell survival and proliferation in response to BCR stimulation, efficient IgG1 antibody responses to T-cell-dependent antigens and for normal induction of germinal center B-cells. In Mus musculus (Mouse), this protein is Myocyte-specific enhancer factor 2C.